Consider the following 219-residue polypeptide: Ribose-5-phosphate isomerase A (219 aa).

Substrate contacts are provided by residues serine 28–threonine 31, aspartate 81–aspartate 84, and lysine 94–glycine 97. Glutamate 103 functions as the Proton acceptor in the catalytic mechanism. Lysine 121 serves as a coordination point for substrate.

This sequence belongs to the ribose 5-phosphate isomerase family. Homodimer.

It catalyses the reaction aldehydo-D-ribose 5-phosphate = D-ribulose 5-phosphate. It participates in carbohydrate degradation; pentose phosphate pathway; D-ribose 5-phosphate from D-ribulose 5-phosphate (non-oxidative stage): step 1/1. In terms of biological role, catalyzes the reversible conversion of ribose-5-phosphate to ribulose 5-phosphate. This is Ribose-5-phosphate isomerase A from Histophilus somni (strain 2336) (Haemophilus somnus).